A 225-amino-acid polypeptide reads, in one-letter code: NAD(P)H-quinone oxidoreductase subunit K, chloroplastic (225 aa).

[4Fe-4S] cluster-binding residues include C43, C44, C108, and C139.

The protein belongs to the complex I 20 kDa subunit family. As to quaternary structure, NDH is composed of at least 16 different subunits, 5 of which are encoded in the nucleus. The cofactor is [4Fe-4S] cluster.

The protein localises to the plastid. It localises to the chloroplast thylakoid membrane. It carries out the reaction a plastoquinone + NADH + (n+1) H(+)(in) = a plastoquinol + NAD(+) + n H(+)(out). The catalysed reaction is a plastoquinone + NADPH + (n+1) H(+)(in) = a plastoquinol + NADP(+) + n H(+)(out). In terms of biological role, NDH shuttles electrons from NAD(P)H:plastoquinone, via FMN and iron-sulfur (Fe-S) centers, to quinones in the photosynthetic chain and possibly in a chloroplast respiratory chain. The immediate electron acceptor for the enzyme in this species is believed to be plastoquinone. Couples the redox reaction to proton translocation, and thus conserves the redox energy in a proton gradient. The chain is NAD(P)H-quinone oxidoreductase subunit K, chloroplastic from Nandina domestica (Heavenly bamboo).